The chain runs to 103 residues: SLC35A4 upstream open reading frame protein (103 aa).

Residues 62 to 84 form a helical membrane-spanning segment; it reads ASAVLGFAVGTCTGIYAAQAYAV.

It is found in the mitochondrion inner membrane. Its function is as follows. Required to maintain cellular respiration. This is SLC35A4 upstream open reading frame protein from Homo sapiens (Human).